Consider the following 141-residue polypeptide: Large ribosomal subunit protein uL11 (141 aa).

It belongs to the universal ribosomal protein uL11 family. In terms of assembly, part of the ribosomal stalk of the 50S ribosomal subunit. Interacts with L10 and the large rRNA to form the base of the stalk. L10 forms an elongated spine to which L12 dimers bind in a sequential fashion forming a multimeric L10(L12)X complex. Post-translationally, one or more lysine residues are methylated.

Forms part of the ribosomal stalk which helps the ribosome interact with GTP-bound translation factors. The sequence is that of Large ribosomal subunit protein uL11 from Exiguobacterium sp. (strain ATCC BAA-1283 / AT1b).